The sequence spans 245 residues: tRNA pseudouridine synthase A (245 aa).

The active-site Nucleophile is the Asp52. Tyr111 serves as a coordination point for substrate.

It belongs to the tRNA pseudouridine synthase TruA family. In terms of assembly, homodimer.

It carries out the reaction uridine(38/39/40) in tRNA = pseudouridine(38/39/40) in tRNA. Functionally, formation of pseudouridine at positions 38, 39 and 40 in the anticodon stem and loop of transfer RNAs. The sequence is that of tRNA pseudouridine synthase A from Rickettsia peacockii (strain Rustic).